A 396-amino-acid chain; its full sequence is Acetylornithine aminotransferase 2 (396 aa).

Pyridoxal 5'-phosphate contacts are provided by residues 102–103 (GA) and phenylalanine 134. Arginine 137 serves as a coordination point for N(2)-acetyl-L-ornithine. 219–222 (DEVQ) serves as a coordination point for pyridoxal 5'-phosphate. An N6-(pyridoxal phosphate)lysine modification is found at lysine 248. Threonine 276 is a pyridoxal 5'-phosphate binding site.

The protein belongs to the class-III pyridoxal-phosphate-dependent aminotransferase family. ArgD subfamily. As to quaternary structure, homodimer. Pyridoxal 5'-phosphate serves as cofactor.

It is found in the cytoplasm. It catalyses the reaction N(2)-acetyl-L-ornithine + 2-oxoglutarate = N-acetyl-L-glutamate 5-semialdehyde + L-glutamate. It functions in the pathway amino-acid biosynthesis; L-arginine biosynthesis; N(2)-acetyl-L-ornithine from L-glutamate: step 4/4. This Bordetella bronchiseptica (strain ATCC BAA-588 / NCTC 13252 / RB50) (Alcaligenes bronchisepticus) protein is Acetylornithine aminotransferase 2.